A 71-amino-acid chain; its full sequence is High-potential iron-sulfur protein (71 aa).

Glutamine 1 bears the Pyrrolidone carboxylic acid mark. [4Fe-4S] cluster is bound by residues cysteine 37, cysteine 40, cysteine 50, and cysteine 64.

The protein belongs to the high-potential iron-sulfur protein (HiPIP) family. As to quaternary structure, homodimer.

Functionally, specific class of high-redox-potential 4Fe-4S ferredoxins. Functions in anaerobic electron transport in most purple and in some other photosynthetic bacteria and in at least one genus (Paracoccus) of halophilic, denitrifying bacteria. This is High-potential iron-sulfur protein (hip) from Halomonas halodenitrificans (strain ATCC 12084 / NCIMB 8669) (Paracoccus halodenitrificans).